A 923-amino-acid polypeptide reads, in one-letter code: Probable dipeptidyl-aminopeptidase B (923 aa).

Residues 1–16 (MATEKGHGRDDEERVP) show a composition bias toward basic and acidic residues. The interval 1 to 21 (MATEKGHGRDDEERVPLTRGS) is disordered. The Cytoplasmic portion of the chain corresponds to 1–99 (MATEKGHGRD…KPMHKSVKIA (99 aa)). The helical; Signal-anchor for type II membrane protein transmembrane segment at 100 to 120 (LWTLLFLSLGGWSLAFVLFIF) threads the bilayer. Residues 121–923 (RSHDTYETPI…GLSYNFKHLH (803 aa)) are Vacuolar-facing. 3 N-linked (GlcNAc...) asparagine glycosylation sites follow: N135, N351, and N574. The active-site Charge relay system is S756. N-linked (GlcNAc...) asparagine glycosylation occurs at N815. Active-site charge relay system residues include D833 and H866. N-linked (GlcNAc...) asparagine glycosylation occurs at N902.

The protein belongs to the peptidase S9B family.

Its subcellular location is the vacuole membrane. It catalyses the reaction Release of an N-terminal dipeptide, Xaa-Yaa-|-Zaa-, from a polypeptide, preferentially when Yaa is Pro, provided Zaa is neither Pro nor hydroxyproline.. In terms of biological role, type IV dipeptidyl-peptidase which removes N-terminal dipeptides sequentially from polypeptides having unsubstituted N-termini provided that the penultimate residue is proline. The polypeptide is Probable dipeptidyl-aminopeptidase B (DAPB) (Ajellomyces capsulatus (strain G186AR / H82 / ATCC MYA-2454 / RMSCC 2432) (Darling's disease fungus)).